We begin with the raw amino-acid sequence, 680 residues long: Outer dense fiber protein 2 (680 aa).

The interval 27–46 (LPKPSATSSQKSHKRGMKGD) is disordered. A phosphoserine mark is found at Ser-68 and Ser-69. Thr-87 carries the post-translational modification Phosphothreonine. A Phosphoserine; by TSSK4 modification is found at Ser-90. Residues Ser-101 and Ser-104 each carry the phosphoserine modification. At Thr-105 the chain carries Phosphothreonine. 2 positions are modified to phosphoserine: Ser-110 and Ser-124. Lys-133 is covalently cross-linked (Glycyl lysine isopeptide (Lys-Gly) (interchain with G-Cter in SUMO2)). At Ser-134 the chain carries Phosphoserine. The stretch at 139-212 (QKGERQMAKR…MSKLVEAEMD (74 aa)) forms a coiled coil. Phosphothreonine is present on Thr-226. Residue Ser-256 is modified to Phosphoserine. 2 coiled-coil regions span residues 275–418 (KEDS…AEQL) and 456–630 (EIIV…SDLR). The interval 387–410 (KQKGDRDKESLKKAIRAQKERAEK) is disordered. Ser-627 carries the phosphoserine modification. The interval 632-680 (RETGGDQCPEYRVPTGDCQEGGGNPPVPAAARGENTGMWDPGKAVGERH) is disordered.

The protein belongs to the ODF2 family. In terms of assembly, self-associates. Associates with microtubules and forms a fibrillar structure partially linked to the microtubule network. Interacts via its C-terminus with PLK1. Interacts with ODF1. Interacts with MARK4; the interaction is required for localization of ODF2 to centrioles. Interacts with TSSK4. Interacts with AKNA. Interacts with QRICH2. Interacts with CFAP58. Interacts with BBOF1. Interacts with CCDC38. Interacts with CCDC42. In terms of processing, tyrosine phosphorylated. Phosphorylated on Ser-90 by TSSK4.

It is found in the cytoplasm. Its subcellular location is the cytoskeleton. The protein localises to the microtubule organizing center. The protein resides in the centrosome. It localises to the cell projection. It is found in the cilium. Its subcellular location is the centriole. The protein localises to the spindle pole. The protein resides in the flagellum. Seems to be a major component of sperm tail outer dense fibers (ODF). ODFs are filamentous structures located on the outside of the axoneme in the midpiece and principal piece of the mammalian sperm tail and may help to maintain the passive elastic structures and elastic recoil of the sperm tail. May have a modulating influence on sperm motility. Functions as a general scaffold protein that is specifically localized at the distal/subdistal appendages of mother centrioles. Component of the centrosome matrix required for the localization of PLK1 and NIN to the centrosomes. Required for the formation and/or maintenance of normal CETN1 assembly. This chain is Outer dense fiber protein 2 (ODF2), found in Pongo abelii (Sumatran orangutan).